Consider the following 3258-residue polypeptide: Protein unc-80 homolog (3258 aa).

Positions 152–173 (VENQGSPGQPCQSSSNDEEENN) are disordered. The segment covering 155–166 (QGSPGQPCQSSS) has biased composition (low complexity). S257 is modified (phosphoserine). Disordered regions lie at residues 291–316 (RGNS…RASL), 449–468 (RKED…GKRR), 522–560 (RRGS…HGEN), 697–717 (KKSE…GAFQ), 732–784 (PAVS…TPVS), 963–1019 (PGKK…EQMQ), 1034–1076 (KSQS…ISLR), 1404–1447 (EDSK…MSNA), and 1817–1836 (AVSA…HHVP). Polar residues predominate over residues 295 to 307 (FDGSLSSQTSQER). Residue S525 is modified to Phosphoserine. A compositionally biased stretch (basic and acidic residues) spans 698-712 (KSENKENETLEKRPS). Gly residues predominate over residues 732 to 767 (PAVSGAGDGGGEEGGGGDGGGGGGDGGGGGGGGGGP). Composition is skewed to basic and acidic residues over residues 769 to 780 (EKNDKNQEKDES) and 965 to 974 (KKVEENEQES). Positions 1035–1052 (SQSAASDTSSQSEQDTSE) are enriched in low complexity. Basic residues predominate over residues 1066 to 1076 (ARSRSRRISLR). Over residues 1417–1429 (LKSDAGVEEKKEG) the composition is skewed to basic and acidic residues. 4 helical membrane passes run 2268 to 2288 (PFVL…DAAN), 2398 to 2418 (IAAT…VEVL), 2785 to 2805 (GLAE…LVCF), and 2831 to 2851 (LALW…FVLL). Polar residues predominate over residues 2942–2964 (NTGTGTVWEQDSEPSQQASQDTL). The interval 2942–2982 (NTGTGTVWEQDSEPSQQASQDTLSRTDEEDEENDSISMPSV) is disordered. Phosphoserine is present on S3042. A disordered region spans residues 3051-3213 (NLLVQQPLGR…DDFTGLETSS (163 aa)). Basic residues predominate over residues 3059 to 3068 (GRKRGLRQLR). Positions 3088–3100 (RLSTTRRSIQPKT) are enriched in polar residues. Residues 3117–3129 (PEPAAAPTDALPA) are compositionally biased toward low complexity. Positions 3175 to 3186 (PTEEGEKEEDTE) are enriched in acidic residues.

The protein belongs to the unc-80 family. In terms of assembly, NALCN complex consists of NALCN and auxiliary subunits, UNC79, UNC80 and NACL1. These auxiliary subunits are essential for the NALCN complex function. Interacts (via N-terminus half) with NALCN; this interaction facilitates NALCN surface localization. Interacts with UNC79. UNC80 bridges NALCN to UNC79. Phosphorylated on tyrosine residues. Moderately expressed in fetal brain, spinal cord, skeletal muscle, thymus, spleen, fetal liver, small intestine, colon, kidney and uterus. Highly expressed in adrenal gland, prostate and testis, as well as in brain and cerebellum.

It is found in the cell membrane. Functionally, auxiliary subunit of the NALCN sodium channel complex, a voltage-gated ion channel responsible for the resting Na(+) permeability that controls neuronal excitability. Activated by neuropeptides substance P, neurotensin, and extracellular Ca(2+) that regulates neuronal excitability by controlling the sizes of NALCN-dependent sodium-leak current. UNC80 is essential for NALCN sensitivity to extracellular Ca(2+). This is Protein unc-80 homolog from Homo sapiens (Human).